The following is a 434-amino-acid chain: Histidinol dehydrogenase (434 aa).

Tyrosine 130, glutamine 191, and asparagine 214 together coordinate NAD(+). Substrate contacts are provided by serine 237, glutamine 259, and histidine 262. Positions 259 and 262 each coordinate Zn(2+). Active-site proton acceptor residues include glutamate 327 and histidine 328. The substrate site is built by histidine 328, aspartate 361, glutamate 415, and histidine 420. Aspartate 361 contributes to the Zn(2+) binding site. Residue histidine 420 participates in Zn(2+) binding.

It belongs to the histidinol dehydrogenase family. Requires Zn(2+) as cofactor.

The catalysed reaction is L-histidinol + 2 NAD(+) + H2O = L-histidine + 2 NADH + 3 H(+). It functions in the pathway amino-acid biosynthesis; L-histidine biosynthesis; L-histidine from 5-phospho-alpha-D-ribose 1-diphosphate: step 9/9. Catalyzes the sequential NAD-dependent oxidations of L-histidinol to L-histidinaldehyde and then to L-histidine. The protein is Histidinol dehydrogenase of Rhizobium meliloti (strain 1021) (Ensifer meliloti).